Consider the following 859-residue polypeptide: Protein translocase subunit SecA (859 aa).

ATP-binding positions include Gln88, 106-110, and Asp496; that span reads GEGKT. Residues 818–838 form a disordered region; that stretch reads FSHQPQSEVKVSRNDPCPCGS. 4 residues coordinate Zn(2+): Cys834, Cys836, Cys845, and Cys846.

The protein belongs to the SecA family. As to quaternary structure, monomer and homodimer. Part of the essential Sec protein translocation apparatus which comprises SecA, SecYEG and auxiliary proteins SecDF-YajC and YidC. Requires Zn(2+) as cofactor.

The protein localises to the cell inner membrane. It localises to the cytoplasm. The catalysed reaction is ATP + H2O + cellular proteinSide 1 = ADP + phosphate + cellular proteinSide 2.. Part of the Sec protein translocase complex. Interacts with the SecYEG preprotein conducting channel. Has a central role in coupling the hydrolysis of ATP to the transfer of proteins into and across the cell membrane, serving as an ATP-driven molecular motor driving the stepwise translocation of polypeptide chains across the membrane. The polypeptide is Protein translocase subunit SecA (Wolinella succinogenes (strain ATCC 29543 / DSM 1740 / CCUG 13145 / JCM 31913 / LMG 7466 / NCTC 11488 / FDC 602W) (Vibrio succinogenes)).